Consider the following 409-residue polypeptide: Autophagy-related protein 37 (409 aa).

Residues 1–313 lie on the Cytoplasmic side of the membrane; that stretch reads MSESIDRVFV…LKLIKTVIKH (313 aa). In terms of domain architecture, ACB spans 5–103; sequence IDRVFVKAIG…LIDTMKQFAS (99 aa). The chain crosses the membrane as a helical span at residues 314–334; the sequence is VAIDAVIIAVLVAVIKRSIII. The Peroxisomal portion of the chain corresponds to 335–409; that stretch reads PNLISNEISL…VSRIRLIKRN (75 aa).

The protein belongs to the ATG37 family. Interacts with ATG30 and PEX3. In terms of processing, phosphorylated.

The protein localises to the peroxisome membrane. Acyl-CoA binding protein which acts as the peroxisome receptor for pexophagy. Required for both micropexophagy and macropexophagy, but not for the cytoplasm to vacuole transport (Cvt) or autophagy pathways. Required for functional micropexophagic apparatus (MIPA) and relocation of ATG11 to the peroxisome-sequestering arms of the vacuole. Binds palmitoyl-CoA but not oleyl-CoA. This Komagataella phaffii (strain GS115 / ATCC 20864) (Yeast) protein is Autophagy-related protein 37.